Consider the following 858-residue polypeptide: Leucine--tRNA ligase (858 aa).

The 'HIGH' region signature appears at 42–52 (PYPSGRLHMGH). A 'KMSKS' region motif is present at residues 618–622 (KMSKS). Residue K621 coordinates ATP.

It belongs to the class-I aminoacyl-tRNA synthetase family.

The protein localises to the cytoplasm. It catalyses the reaction tRNA(Leu) + L-leucine + ATP = L-leucyl-tRNA(Leu) + AMP + diphosphate. This chain is Leucine--tRNA ligase, found in Photobacterium profundum (strain SS9).